The chain runs to 252 residues: Large ribosomal subunit protein uL4 (252 aa).

It belongs to the universal ribosomal protein uL4 family. Part of the 50S ribosomal subunit.

Its function is as follows. One of the primary rRNA binding proteins, this protein initially binds near the 5'-end of the 23S rRNA. It is important during the early stages of 50S assembly. It makes multiple contacts with different domains of the 23S rRNA in the assembled 50S subunit and ribosome. Forms part of the polypeptide exit tunnel. The sequence is that of Large ribosomal subunit protein uL4 from Methanococcus vannielii (strain ATCC 35089 / DSM 1224 / JCM 13029 / OCM 148 / SB).